Reading from the N-terminus, the 444-residue chain is Ribosomal protein uS12 methylthiotransferase RimO (444 aa).

Residues 2–118 enclose the MTTase N-terminal domain; the sequence is PSIGLLSLGC…IVEVVNHALE (117 aa). 6 residues coordinate [4Fe-4S] cluster: Cys-11, Cys-47, Cys-81, Cys-156, Cys-160, and Cys-163. In terms of domain architecture, Radical SAM core spans 142 to 372; the sequence is STPSYTAYVK…MKLQREISLS (231 aa). The 70-residue stretch at 375-444 folds into the TRAM domain; sequence QKRIGQEIEV…EYDLMGELAQ (70 aa).

Belongs to the methylthiotransferase family. RimO subfamily. The cofactor is [4Fe-4S] cluster.

It is found in the cytoplasm. It catalyses the reaction L-aspartate(89)-[ribosomal protein uS12]-hydrogen + (sulfur carrier)-SH + AH2 + 2 S-adenosyl-L-methionine = 3-methylsulfanyl-L-aspartate(89)-[ribosomal protein uS12]-hydrogen + (sulfur carrier)-H + 5'-deoxyadenosine + L-methionine + A + S-adenosyl-L-homocysteine + 2 H(+). Catalyzes the methylthiolation of an aspartic acid residue of ribosomal protein uS12. This Desulforamulus reducens (strain ATCC BAA-1160 / DSM 100696 / MI-1) (Desulfotomaculum reducens) protein is Ribosomal protein uS12 methylthiotransferase RimO.